A 174-amino-acid chain; its full sequence is Peptide deformylase (174 aa).

Positions 96 and 138 each coordinate Fe cation. Glutamate 139 is an active-site residue. Histidine 142 is a binding site for Fe cation.

This sequence belongs to the polypeptide deformylase family. The cofactor is Fe(2+).

It carries out the reaction N-terminal N-formyl-L-methionyl-[peptide] + H2O = N-terminal L-methionyl-[peptide] + formate. Removes the formyl group from the N-terminal Met of newly synthesized proteins. Requires at least a dipeptide for an efficient rate of reaction. N-terminal L-methionine is a prerequisite for activity but the enzyme has broad specificity at other positions. The sequence is that of Peptide deformylase from Helicobacter pylori (strain HPAG1).